The primary structure comprises 376 residues: 5-amino-6-(D-ribitylamino)uracil--L-tyrosine 4-hydroxyphenyl transferase 1 (376 aa).

The Radical SAM core domain occupies 50-284 (VTYVVNRNIN…AISRILLHGH (235 aa)). Positions 64, 68, and 71 each coordinate [4Fe-4S] cluster.

It belongs to the radical SAM superfamily. CofH family. Consists of two subunits, CofG and CofH. The cofactor is [4Fe-4S] cluster.

The enzyme catalyses 5-amino-6-(D-ribitylamino)uracil + L-tyrosine + S-adenosyl-L-methionine = 5-amino-5-(4-hydroxybenzyl)-6-(D-ribitylimino)-5,6-dihydrouracil + 2-iminoacetate + 5'-deoxyadenosine + L-methionine + H(+). It functions in the pathway cofactor biosynthesis; coenzyme F0 biosynthesis. Functionally, catalyzes the radical-mediated synthesis of 5-amino-5-(4-hydroxybenzyl)-6-(D-ribitylimino)-5,6-dihydrouracil from 5-amino-6-(D-ribitylamino)uracil and L-tyrosine. This is 5-amino-6-(D-ribitylamino)uracil--L-tyrosine 4-hydroxyphenyl transferase 1 from Methanosarcina barkeri (strain Fusaro / DSM 804).